The chain runs to 270 residues: Acyl-[acyl-carrier-protein]--UDP-N-acetylglucosamine O-acyltransferase (270 aa).

Residues 69–72, His121, His140, and Gln157 each bind substrate; that span reads QDLK.

Belongs to the transferase hexapeptide repeat family. LpxA subfamily. In terms of assembly, homotrimer.

The protein localises to the cytoplasm. It carries out the reaction a (3R)-hydroxyacyl-[ACP] + UDP-N-acetyl-alpha-D-glucosamine = a UDP-3-O-[(3R)-3-hydroxyacyl]-N-acetyl-alpha-D-glucosamine + holo-[ACP]. It participates in glycolipid biosynthesis; lipid IV(A) biosynthesis; lipid IV(A) from (3R)-3-hydroxytetradecanoyl-[acyl-carrier-protein] and UDP-N-acetyl-alpha-D-glucosamine: step 1/6. Functionally, involved in the biosynthesis of lipid A, a phosphorylated glycolipid that anchors the lipopolysaccharide to the outer membrane of the cell. In Helicobacter pylori (strain ATCC 700392 / 26695) (Campylobacter pylori), this protein is Acyl-[acyl-carrier-protein]--UDP-N-acetylglucosamine O-acyltransferase.